The following is a 94-amino-acid chain: Small ribosomal subunit protein uS19 (94 aa).

The protein belongs to the universal ribosomal protein uS19 family.

Functionally, protein S19 forms a complex with S13 that binds strongly to the 16S ribosomal RNA. The polypeptide is Small ribosomal subunit protein uS19 (Buchnera aphidicola subsp. Cinara cedri (strain Cc)).